A 132-amino-acid chain; its full sequence is MLKSSVIAAQYWAFFTFFFIAVSICVFMLSISWILGGRSSSRYKNTPFESGIVPTNTTNMYCSVKFYLVAIYFVLFDVEALYLYAWSVSIVECGWIGFIEALIFILFLLSGLIYLISSKLLVWKSKNNIHVT.

3 consecutive transmembrane segments (helical) span residues 14–34 (FFTF…ISWI), 66–86 (FYLV…LYAW), and 96–116 (IGFI…IYLI).

It belongs to the complex I subunit 3 family. As to quaternary structure, NDH-1 is composed of 13 different subunits. Subunits NuoA, H, J, K, L, M, N constitute the membrane sector of the complex.

It localises to the cell membrane. The catalysed reaction is a quinone + NADH + 5 H(+)(in) = a quinol + NAD(+) + 4 H(+)(out). Functionally, NDH-1 shuttles electrons from NADH, via FMN and iron-sulfur (Fe-S) centers, to quinones in the respiratory chain. The immediate electron acceptor for the enzyme in this species is believed to be ubiquinone. Couples the redox reaction to proton translocation (for every two electrons transferred, four hydrogen ions are translocated across the cytoplasmic membrane), and thus conserves the redox energy in a proton gradient. The polypeptide is NADH-quinone oxidoreductase subunit A (Buchnera aphidicola subsp. Baizongia pistaciae (strain Bp)).